Reading from the N-terminus, the 497-residue chain is Cysteine desulfurase, mitochondrial (497 aa).

Residues 1-33 constitute a mitochondrion transit peptide; the sequence is MLKSTATRSITRLSQVYNVPAATYRACLVSRRF. Pyridoxal 5'-phosphate contacts are provided by residues 168–169, Asn-248, Gln-276, and 296–298; these read AT and SSH. At Lys-299 the chain carries N6-(pyridoxal phosphate)lysine. Thr-336 contacts pyridoxal 5'-phosphate. Residue Cys-421 is the Cysteine persulfide intermediate of the active site. Cys-421 lines the [2Fe-2S] cluster pocket.

The protein belongs to the class-V pyridoxal-phosphate-dependent aminotransferase family. NifS/IscS subfamily. The cofactor is pyridoxal 5'-phosphate.

The protein resides in the mitochondrion. It catalyses the reaction (sulfur carrier)-H + L-cysteine = (sulfur carrier)-SH + L-alanine. Catalyzes the removal of elemental sulfur from cysteine to produce alanine. It supplies the inorganic sulfur for iron-sulfur (Fe-S) clusters. Plays a role in both tRNA-processing and mitochondrial metabolism. Involved in the 2-thio-modification of both 5-carboxymethylaminomethyl-2-thiouridine in mitochondrial tRNAs and 5-methoxycarbonylmethyl-2-thiouridine (mcm5s2U) in cytoplasmic tRNAs. The chain is Cysteine desulfurase, mitochondrial from Saccharomyces cerevisiae (strain ATCC 204508 / S288c) (Baker's yeast).